The following is a 385-amino-acid chain: Tuliposide A-converting enzyme 1, chloroplastic (385 aa).

The N-terminal 77 residues, methionine 1–threonine 77, are a transit peptide targeting the chloroplast. The active-site Acyl-ester intermediate is serine 235. Catalysis depends on charge relay system residues aspartate 327 and histidine 359.

The protein belongs to the AB hydrolase superfamily. As to quaternary structure, homodimer. Expressed in roots, stems, leaves, petals, stamens and pistils, but not in bulb scales.

The protein localises to the plastid. It is found in the chloroplast. It carries out the reaction 6-tuliposide A = tulipalin A + D-glucose. Inhibited by NaF, AgNO(3), HgCl(2), CuSO(4) and phenylmethylsulfonyl fluoride (PMSF). Functionally, lactone-forming carboxylesterases, specifically catalyzing intramolecular transesterification, but not hydrolysis. Involved in the biosynthesis of tulipalins, defensive chemicals that show antimicrobial activities against a broad range of strains of bacteria and fungi. Substrates are 6-tuliposide A &gt; 6-tuliposide B. In Tulipa gesneriana (Garden tulip), this protein is Tuliposide A-converting enzyme 1, chloroplastic (TCEA1).